The sequence spans 339 residues: 2-deoxy-scyllo-inosamine dehydrogenase (339 aa).

Zn(2+) contacts are provided by Cys37, His59, Cys88, Cys91, Cys94, Cys102, and Glu143.

Belongs to the zinc-containing alcohol dehydrogenase family. DOIA dehydrogenase subfamily. Zn(2+) serves as cofactor.

It catalyses the reaction 2-deoxy-scyllo-inosamine + NADP(+) = 3-amino-2,3-dideoxy-scyllo-inosose + NADPH + H(+). The catalysed reaction is 2-deoxy-scyllo-inosamine + NAD(+) = 3-amino-2,3-dideoxy-scyllo-inosose + NADH + H(+). The protein operates within metabolic intermediate biosynthesis; 2-deoxystreptamine biosynthesis; 2-deoxystreptamine from D-glucose 6-phosphate: step 3/4. It functions in the pathway antibiotic biosynthesis; paromomycin biosynthesis. Catalyzes the oxidation of 2-deoxy-scyllo-inosamine (DOIA) with NAD(+) or NADP(+), forming 3-amino-2,3-dideoxy-scyllo-inosose (amino-DOI). The protein is 2-deoxy-scyllo-inosamine dehydrogenase (parE) of Streptomyces paromomycinus (Streptomyces rimosus subsp. paromomycinus).